A 232-amino-acid chain; its full sequence is UPF0758 protein Clos_1766 (232 aa).

The 123-residue stretch at lysine 110–isoleucine 232 folds into the MPN domain. Positions 181, 183, and 194 each coordinate Zn(2+). The JAMM motif signature appears at histidine 181–aspartate 194.

Belongs to the UPF0758 family.

In Alkaliphilus oremlandii (strain OhILAs) (Clostridium oremlandii (strain OhILAs)), this protein is UPF0758 protein Clos_1766.